A 123-amino-acid chain; its full sequence is MHYCNKDIGSFGETIAADYIKNSGYIILERNFRCKLGEIDIIAKDKNFIVFIEVKTRYGYIYGSPSEAINFRKQNKIYKTAQLYIIKKAIHNKFYFRFDVIEVILNTLNSNYSIKLIKNAFQI.

This sequence belongs to the UPF0102 family.

The sequence is that of UPF0102 protein CLJ_B2665 from Clostridium botulinum (strain 657 / Type Ba4).